A 1101-amino-acid polypeptide reads, in one-letter code: Serine/threonine-protein kinase PSK2 (1101 aa).

Threonine 118 carries the phosphothreonine modification. The 259-residue stretch at 841-1099 (FTILQVMGEG…IDEIYEDKWL (259 aa)) folds into the Protein kinase domain. ATP-binding positions include 847–855 (MGEGAYGKV) and lysine 870. Aspartate 975 serves as the catalytic Proton acceptor.

The protein belongs to the protein kinase superfamily. Ser/Thr protein kinase family.

It is found in the cytoplasm. It carries out the reaction L-seryl-[protein] + ATP = O-phospho-L-seryl-[protein] + ADP + H(+). It catalyses the reaction L-threonyl-[protein] + ATP = O-phospho-L-threonyl-[protein] + ADP + H(+). Its function is as follows. Serine/threonine-protein kinase involved in the control of sugar metabolism and translation. Phosphorylates UGP1, which is required for normal glycogen and beta-(1,6)-glucan synthesis. This phosphorylation shifts glucose partitioning toward cell wall glucan synthesis at the expense of glycogen synthesis. Also phosphorylates the glycogen synthase GSY2 and the translation factors CAF20, TIF11 and SRO9. This Saccharomyces cerevisiae (strain ATCC 204508 / S288c) (Baker's yeast) protein is Serine/threonine-protein kinase PSK2 (PSK2).